We begin with the raw amino-acid sequence, 360 residues long: MTTLLQQQGSANLWERFCQWVTSTENRFYVGWFGVLMIPTLLTATICFILAFVAAPPVDIDGIREPVAGSLLYGNNIITAAVVPSSNAIGLHFYPIWDAANLDEWLYNGGPYQLIVFHFLLGIFSYMGREWELSYRLGMRPWIAVAYSAPVAAATAVLLVYSIGQGSFSDGLPLGISGTFNFMFVLQAEHNVLMHPFHMLGVAGVFGGALFSAMHGSLVTSSLIRETTETESQNSGYRFGQEEETYNIVAAHGYFGRLIFQYASFNNSRALHFFLAAWPVIGIWFASLAVACFAFNLNGFNFNQSLLDSQGRVINTWADILNRANLGIEAMHERNVHNFPLDLAAGDQAPVALQAPAING.

The next 3 membrane-spanning stretches (helical) occupy residues Tyr29–Ile46, His118–Leu133, and Trp142–Ala156. Residue His118 coordinates chlorophyll a. Tyr126 contributes to the pheophytin a binding site. Residues Asp170 and Glu189 each contribute to the [CaMn4O5] cluster site. Residues Phe197 to Leu218 traverse the membrane as a helical segment. His198 is a binding site for chlorophyll a. A quinone contacts are provided by residues His215 and Ser264–Phe265. His215 provides a ligand contact to Fe cation. His272 lines the Fe cation pocket. The helical transmembrane segment at Phe274–Leu288 threads the bilayer. Residues His332, Glu333, Asp342, and Ala344 each contribute to the [CaMn4O5] cluster site. Residues Ala345–Gly360 constitute a propeptide that is removed on maturation.

Belongs to the reaction center PufL/M/PsbA/D family. PSII is composed of 1 copy each of membrane proteins PsbA, PsbB, PsbC, PsbD, PsbE, PsbF, PsbH, PsbI, PsbJ, PsbK, PsbL, PsbM, PsbT, PsbX, PsbY, PsbZ, Psb30/Ycf12, peripheral proteins PsbO, CyanoQ (PsbQ), PsbU, PsbV and a large number of cofactors. It forms dimeric complexes. The D1/D2 heterodimer binds P680, chlorophylls that are the primary electron donor of PSII, and subsequent electron acceptors. It shares a non-heme iron and each subunit binds pheophytin, quinone, additional chlorophylls, carotenoids and lipids. D1 provides most of the ligands for the Mn4-Ca-O5 cluster of the oxygen-evolving complex (OEC). There is also a Cl(-1) ion associated with D1 and D2, which is required for oxygen evolution. The PSII complex binds additional chlorophylls, carotenoids and specific lipids. serves as cofactor. Tyr-161 forms a radical intermediate that is referred to as redox-active TyrZ, YZ or Y-Z. Post-translationally, C-terminally processed by CtpA; processing is essential to allow assembly of the oxygen-evolving complex and thus photosynthetic growth.

The protein localises to the cellular thylakoid membrane. It carries out the reaction 2 a plastoquinone + 4 hnu + 2 H2O = 2 a plastoquinol + O2. Functionally, photosystem II (PSII) is a light-driven water:plastoquinone oxidoreductase that uses light energy to abstract electrons from H(2)O, generating O(2) and a proton gradient subsequently used for ATP formation. It consists of a core antenna complex that captures photons, and an electron transfer chain that converts photonic excitation into a charge separation. The D1/D2 (PsbA/PsbD) reaction center heterodimer binds P680, the primary electron donor of PSII as well as several subsequent electron acceptors. This chain is Photosystem II protein D1 3, found in Picosynechococcus sp. (strain ATCC 27264 / PCC 7002 / PR-6) (Agmenellum quadruplicatum).